Reading from the N-terminus, the 642-residue chain is Poly(A) polymerase beta (642 aa).

Residues 101–103 (FGS), threonine 110, 114–116 (DID), aspartate 168, lysine 229, tyrosine 238, and 247–248 (GV) contribute to the ATP site. 3 residues coordinate Mg(2+): aspartate 114, aspartate 116, and aspartate 168. 2 disordered regions span residues 530–553 (SENS…GNPQ) and 620–642 (LVNH…ILGV). Over residues 620–636 (LVNHPSRPSGNTATNIP) the composition is skewed to polar residues.

It belongs to the poly(A) polymerase family. Interacts with GSG1. Mg(2+) is required as a cofactor. Mn(2+) serves as cofactor. In terms of tissue distribution, testis specific.

The protein resides in the cytoplasm. The protein localises to the nucleus. It carries out the reaction RNA(n) + ATP = RNA(n)-3'-adenine ribonucleotide + diphosphate. The sequence is that of Poly(A) polymerase beta from Mus musculus (Mouse).